Consider the following 389-residue polypeptide: Sedoheptulose-1,7-bisphosphatase, chloroplastic (389 aa).

An intrachain disulfide couples Cys115 to Cys120. Mg(2+)-binding residues include Asp126, Glu155, Asp173, Leu175, and Asp176. Substrate is bound by residues 176-179 (DGSS), Tyr287, and Lys317. Position 323 (Glu323) interacts with Mg(2+).

It belongs to the FBPase class 1 family. Homodimer. Mg(2+) serves as cofactor.

Its subcellular location is the plastid. The protein localises to the chloroplast. The enzyme catalyses D-sedoheptulose 1,7-bisphosphate + H2O = D-sedoheptulose 7-phosphate + phosphate. Its pathway is carbohydrate biosynthesis; Calvin cycle. The polypeptide is Sedoheptulose-1,7-bisphosphatase, chloroplastic (CSBP) (Chlamydomonas reinhardtii (Chlamydomonas smithii)).